Reading from the N-terminus, the 242-residue chain is Probable transcriptional regulatory protein PXO_01555 (242 aa).

The protein belongs to the TACO1 family.

The protein localises to the cytoplasm. The polypeptide is Probable transcriptional regulatory protein PXO_01555 (Xanthomonas oryzae pv. oryzae (strain PXO99A)).